We begin with the raw amino-acid sequence, 516 residues long: uncharacterized protein (516 aa).

A run of 9 helical transmembrane segments spans residues 183–203 (SAAD…GDGV), 261–281 (VLKT…TYII), 308–328 (VMNG…TALL), 329–349 (LDHQ…AYSF), 356–376 (LLDV…GQVL), 379–399 (LAFS…LALA), 430–450 (LGHG…FLAL), 461–481 (PAWL…IWLL), and 492–512 (IVFA…ASAF).

The protein localises to the cell membrane. Possible permease/transporter. This is an uncharacterized protein from Sinorhizobium fredii (strain NBRC 101917 / NGR234).